A 126-amino-acid polypeptide reads, in one-letter code: Aspartate 1-decarboxylase (126 aa).

The active-site Schiff-base intermediate with substrate; via pyruvic acid is the Ser25. Residue Ser25 is modified to Pyruvic acid (Ser). Residue Thr57 coordinates substrate. The active-site Proton donor is the Tyr58. 73–75 (GGA) contacts substrate.

Belongs to the PanD family. Heterooctamer of four alpha and four beta subunits. Pyruvate serves as cofactor. Post-translationally, is synthesized initially as an inactive proenzyme, which is activated by self-cleavage at a specific serine bond to produce a beta-subunit with a hydroxyl group at its C-terminus and an alpha-subunit with a pyruvoyl group at its N-terminus.

The protein resides in the cytoplasm. It catalyses the reaction L-aspartate + H(+) = beta-alanine + CO2. Its pathway is cofactor biosynthesis; (R)-pantothenate biosynthesis; beta-alanine from L-aspartate: step 1/1. In terms of biological role, catalyzes the pyruvoyl-dependent decarboxylation of aspartate to produce beta-alanine. The chain is Aspartate 1-decarboxylase from Stenotrophomonas maltophilia (strain R551-3).